A 176-amino-acid polypeptide reads, in one-letter code: Large ribosomal subunit protein bL19 (176 aa).

The protein belongs to the bacterial ribosomal protein bL19 family.

Functionally, this protein is located at the 30S-50S ribosomal subunit interface and may play a role in the structure and function of the aminoacyl-tRNA binding site. This Sinorhizobium fredii (strain NBRC 101917 / NGR234) protein is Large ribosomal subunit protein bL19.